Here is a 117-residue protein sequence, read N- to C-terminus: Acylphosphatase (117 aa).

One can recognise an Acylphosphatase-like domain in the interval 31 to 117 (RWRWIIQGQV…RGDDWFEVRY (87 aa)). Residues R46 and N64 contribute to the active site.

The protein belongs to the acylphosphatase family.

The enzyme catalyses an acyl phosphate + H2O = a carboxylate + phosphate + H(+). This chain is Acylphosphatase (acyP), found in Synechococcus sp. (strain CC9902).